The primary structure comprises 204 residues: MIAQLKGSLAAKHPDHVVMDVHGVGYRVFISLATYNELPTVGEACLLYTVTHVREDAFLLYGFHSESQRKVFNLLTSVNGIGTKLALAALSSHTPEALLTALSREDLTLLCTIPGVGKKTAQRMAMELKDKLGALPMAAPTTAIGAATMAANPAGLREEVASALLNLGYKPPQVDAALAKLFSAGEITDISVALKGALKLLAPA.

A domain I region spans residues 1–64 (MIAQLKGSLA…EDAFLLYGFH (64 aa)). The segment at 65 to 143 (SESQRKVFNL…ALPMAAPTTA (79 aa)) is domain II. Residues 144 to 154 (IGAATMAANPA) form a flexible linker region. The interval 154–204 (AGLREEVASALLNLGYKPPQVDAALAKLFSAGEITDISVALKGALKLLAPA) is domain III.

The protein belongs to the RuvA family. In terms of assembly, homotetramer. Forms an RuvA(8)-RuvB(12)-Holliday junction (HJ) complex. HJ DNA is sandwiched between 2 RuvA tetramers; dsDNA enters through RuvA and exits via RuvB. An RuvB hexamer assembles on each DNA strand where it exits the tetramer. Each RuvB hexamer is contacted by two RuvA subunits (via domain III) on 2 adjacent RuvB subunits; this complex drives branch migration. In the full resolvosome a probable DNA-RuvA(4)-RuvB(12)-RuvC(2) complex forms which resolves the HJ.

The protein resides in the cytoplasm. Functionally, the RuvA-RuvB-RuvC complex processes Holliday junction (HJ) DNA during genetic recombination and DNA repair, while the RuvA-RuvB complex plays an important role in the rescue of blocked DNA replication forks via replication fork reversal (RFR). RuvA specifically binds to HJ cruciform DNA, conferring on it an open structure. The RuvB hexamer acts as an ATP-dependent pump, pulling dsDNA into and through the RuvAB complex. HJ branch migration allows RuvC to scan DNA until it finds its consensus sequence, where it cleaves and resolves the cruciform DNA. This is Holliday junction branch migration complex subunit RuvA from Magnetococcus marinus (strain ATCC BAA-1437 / JCM 17883 / MC-1).